Here is a 512-residue protein sequence, read N- to C-terminus: Histidine ammonia-lyase (512 aa).

A cross-link (5-imidazolinone (Ala-Gly)) is located at residues 146 to 148 (ASG). Residue S147 is modified to 2,3-didehydroalanine (Ser).

It belongs to the PAL/histidase family. Post-translationally, contains an active site 4-methylidene-imidazol-5-one (MIO), which is formed autocatalytically by cyclization and dehydration of residues Ala-Ser-Gly.

The protein localises to the cytoplasm. The enzyme catalyses L-histidine = trans-urocanate + NH4(+). Its pathway is amino-acid degradation; L-histidine degradation into L-glutamate; N-formimidoyl-L-glutamate from L-histidine: step 1/3. The chain is Histidine ammonia-lyase from Paracidovorax citrulli (strain AAC00-1) (Acidovorax citrulli).